A 402-amino-acid polypeptide reads, in one-letter code: Multidrug resistance protein MdtH (402 aa).

At 1–12 (MSRVSQARNLGK) the chain is on the cytoplasmic side. A helical membrane pass occupies residues 13 to 33 (YFLLIDNMLVVLGFFVVFPLI). Residues 34–98 (SIRFVDQMGW…GFATMGIAHE (65 aa)) are Periplasmic-facing. Residues 99–116 (PWLLWFSCLLSGLGGTLF) traverse the membrane as a helical segment. The Cytoplasmic segment spans residues 117-138 (DPPRSALVVKLIRPQQRGRFFS). A helical transmembrane segment spans residues 139-159 (LLMMQDSAGAVIGALLGSWLL). The Periplasmic portion of the chain corresponds to 160–164 (QYDFR). Residues 165–185 (LVCATGAVLFVLCAAFNAWLL) traverse the membrane as a helical segment. Over 186–213 (PAWKLSTVRTPVREGMTRVMRDKRFVTY) the chain is Cytoplasmic. The chain crosses the membrane as a helical span at residues 214-234 (VLTLAGYYMLAVQVMLMLPIM). Topologically, residues 235-243 (VNDVAGAPS) are periplasmic. Residues 244 to 264 (AVKWMYAIEACLSLTLLYPIA) form a helical membrane-spanning segment. Residues 265 to 276 (RWSEKHFRLEHR) are Cytoplasmic-facing. A helical transmembrane segment spans residues 277–297 (LMAGLLIMSLSMMPVGMVSGL). Residues 298-299 (QQ) lie on the Periplasmic side of the membrane. Residues 300-320 (LFTLICLFYIGSIIAEPARET) traverse the membrane as a helical segment. Residues 321 to 339 (LSASLADARARGSYMGCSR) lie on the Cytoplasmic side of the membrane. Residues 340–360 (LGLAIGGAIGYIGGGWLFDLG) traverse the membrane as a helical segment. The Periplasmic segment spans residues 361 to 367 (KSAHQPE). Residues 368-388 (LPWMMLGIIGIFTFLALGWQF) form a helical membrane-spanning segment. At 389 to 402 (SQKRAARRLLERDA) the chain is on the cytoplasmic side.

This sequence belongs to the major facilitator superfamily. DHA1 family. MdtH (TC 2.A.1.2.21) subfamily.

It localises to the cell inner membrane. Confers resistance to norfloxacin and enoxacin. This Escherichia coli (strain SE11) protein is Multidrug resistance protein MdtH.